Reading from the N-terminus, the 165-residue chain is Phosphopantetheine adenylyltransferase (165 aa).

Substrate is bound at residue S9. ATP-binding positions include 9-10 and H17; that span reads SF. Positions 41, 75, and 89 each coordinate substrate. ATP is bound by residues 90 to 92, E100, and 125 to 131; these read GVR and YLFVRSD.

This sequence belongs to the bacterial CoaD family. As to quaternary structure, homohexamer. The cofactor is Mg(2+).

Its subcellular location is the cytoplasm. The catalysed reaction is (R)-4'-phosphopantetheine + ATP + H(+) = 3'-dephospho-CoA + diphosphate. The protein operates within cofactor biosynthesis; coenzyme A biosynthesis; CoA from (R)-pantothenate: step 4/5. Its function is as follows. Reversibly transfers an adenylyl group from ATP to 4'-phosphopantetheine, yielding dephospho-CoA (dPCoA) and pyrophosphate. The protein is Phosphopantetheine adenylyltransferase of Borrelia duttonii (strain Ly).